The sequence spans 115 residues: Large ribosomal subunit protein bL20c (115 aa).

Belongs to the bacterial ribosomal protein bL20 family.

It localises to the plastid. It is found in the chloroplast. Its function is as follows. Binds directly to 23S ribosomal RNA and is necessary for the in vitro assembly process of the 50S ribosomal subunit. It is not involved in the protein synthesizing functions of that subunit. This is Large ribosomal subunit protein bL20c (rpl20) from Cyanidium caldarium (Red alga).